Reading from the N-terminus, the 339-residue chain is UDP-glucose 4-epimerase (339 aa).

NAD(+) contacts are provided by residues 12-13 (FI), 32-37 (DNLCNS), 59-60 (DI), 81-85 (FAGLK), N100, S125, Y150, K154, and F179. Residues S125 and Y150 each coordinate substrate. The active-site Proton acceptor is Y150. Substrate is bound by residues N180, 200 to 201 (NL), 217 to 219 (AVF), R232, and 293 to 296 (RAGD).

The protein belongs to the NAD(P)-dependent epimerase/dehydratase family. In terms of assembly, homodimer. NAD(+) is required as a cofactor.

The enzyme catalyses UDP-alpha-D-glucose = UDP-alpha-D-galactose. It participates in carbohydrate metabolism; galactose metabolism. Involved in the metabolism of galactose. Plays an essential role in the incorporation of galactose into meningococcal lipopolysaccharide surface molecules, which are important for pathogenesis. Catalyzes the conversion of UDP-galactose (UDP-Gal) to UDP-glucose (UDP-Glc) through a mechanism involving the transient reduction of NAD. This is UDP-glucose 4-epimerase (galE) from Neisseria meningitidis serogroup C.